The primary structure comprises 352 residues: Lipoyl synthase (352 aa).

Residues 1–21 (MTSVDTPTPHGGTPAPAPATA) are disordered. Cys71, Cys76, Cys82, Cys97, Cys101, Cys104, and Ser308 together coordinate [4Fe-4S] cluster. The Radical SAM core domain occupies 83–297 (WEDREATFLI…SRVAEEIGFA (215 aa)).

The protein belongs to the radical SAM superfamily. Lipoyl synthase family. It depends on [4Fe-4S] cluster as a cofactor.

It is found in the cytoplasm. It catalyses the reaction [[Fe-S] cluster scaffold protein carrying a second [4Fe-4S](2+) cluster] + N(6)-octanoyl-L-lysyl-[protein] + 2 oxidized [2Fe-2S]-[ferredoxin] + 2 S-adenosyl-L-methionine + 4 H(+) = [[Fe-S] cluster scaffold protein] + N(6)-[(R)-dihydrolipoyl]-L-lysyl-[protein] + 4 Fe(3+) + 2 hydrogen sulfide + 2 5'-deoxyadenosine + 2 L-methionine + 2 reduced [2Fe-2S]-[ferredoxin]. It functions in the pathway protein modification; protein lipoylation via endogenous pathway; protein N(6)-(lipoyl)lysine from octanoyl-[acyl-carrier-protein]: step 2/2. In terms of biological role, catalyzes the radical-mediated insertion of two sulfur atoms into the C-6 and C-8 positions of the octanoyl moiety bound to the lipoyl domains of lipoate-dependent enzymes, thereby converting the octanoylated domains into lipoylated derivatives. The chain is Lipoyl synthase from Nocardia farcinica (strain IFM 10152).